Reading from the N-terminus, the 304-residue chain is ATP phosphoribosyltransferase (304 aa).

This sequence belongs to the ATP phosphoribosyltransferase family. Long subfamily. Mg(2+) is required as a cofactor.

It is found in the cytoplasm. The catalysed reaction is 1-(5-phospho-beta-D-ribosyl)-ATP + diphosphate = 5-phospho-alpha-D-ribose 1-diphosphate + ATP. The protein operates within amino-acid biosynthesis; L-histidine biosynthesis; L-histidine from 5-phospho-alpha-D-ribose 1-diphosphate: step 1/9. Feedback inhibited by histidine. In terms of biological role, catalyzes the condensation of ATP and 5-phosphoribose 1-diphosphate to form N'-(5'-phosphoribosyl)-ATP (PR-ATP). Has a crucial role in the pathway because the rate of histidine biosynthesis seems to be controlled primarily by regulation of HisG enzymatic activity. This is ATP phosphoribosyltransferase from Xanthomonas oryzae pv. oryzae (strain MAFF 311018).